A 183-amino-acid polypeptide reads, in one-letter code: Large ribosomal subunit protein uL6 (183 aa).

Belongs to the universal ribosomal protein uL6 family. Part of the 50S ribosomal subunit.

In terms of biological role, this protein binds to the 23S rRNA, and is important in its secondary structure. It is located near the subunit interface in the base of the L7/L12 stalk, and near the tRNA binding site of the peptidyltransferase center. The protein is Large ribosomal subunit protein uL6 of Chlamydia abortus (strain DSM 27085 / S26/3) (Chlamydophila abortus).